Here is a 1349-residue protein sequence, read N- to C-terminus: Protein turtle homolog B (1349 aa).

An N-terminal signal peptide occupies residues 1–20 (MIWYVATFIASVIGTRGLAA). The Extracellular segment spans residues 21–722 (EGAHGLREEP…DLTEDGLARP (702 aa)). Ig-like domains are found at residues 24 to 129 (HGLR…HNGS), 139 to 226 (PTFT…LLVQ), 228 to 320 (PPFI…AYLT), 324 to 415 (PARV…ARLV), and 420 to 504 (PYFT…THLT). 2 cysteine pairs are disulfide-bonded: cysteine 45–cysteine 113 and cysteine 161–cysteine 208. N-linked (GlcNAc...) asparagine glycans are attached at residues asparagine 241 and asparagine 258. 3 disulfides stabilise this stretch: cysteine 250-cysteine 303, cysteine 346-cysteine 397, and cysteine 442-cysteine 488. Fibronectin type-III domains are found at residues 512 to 604 (APGS…TLAF) and 614 to 708 (LVTP…STDI). N-linked (GlcNAc...) asparagine glycosylation is present at asparagine 624. The helical transmembrane segment at 723–743 (VLAGIVATICFLAAAILFSTL) threads the bilayer. Residues 744–1349 (AACFVNKQRK…SPPERALSKL (606 aa)) lie on the Cytoplasmic side of the membrane. 3 disordered regions span residues 758–817 (RKKD…EKEL), 911–1081 (QLTP…RGLP), and 1099–1349 (APKG…LSKL). A phosphoserine mark is found at serine 775, serine 783, and serine 794. A compositionally biased stretch (polar residues) spans 911–921 (QLTPLSSSQES). A compositionally biased stretch (low complexity) spans 985–998 (VPEVGSPLSSVMSS). Composition is skewed to polar residues over residues 1018–1033 (ENAS…TPTG), 1129–1141 (LVSQ…TSQG), and 1199–1214 (SRLS…SRTG). Arginine 1136 carries the omega-N-methylarginine modification. Phosphoserine is present on residues serine 1207 and serine 1215. The segment covering 1251-1271 (STPSTGSPSQSSRSGSPSYRP) has biased composition (low complexity). The span at 1283 to 1292 (PSPPPGPAPA) shows a compositional bias: pro residues.

This sequence belongs to the immunoglobulin superfamily. Turtle family. As to quaternary structure, found in a complex with MAGI2 and NLGN2, where it interacts with MAGI2 (via PDZ 5 and PDZ 6 domains). Post-translationally, N-glycosylated and sialylated. Not significantly O-glycosylated.

It is found in the postsynaptic cell membrane. The protein resides in the postsynaptic density. In terms of biological role, transmembrane protein which is abundantly expressed in interneurons, where it may regulate inhibitory synapse development. May mediate homophilic cell adhesion. The polypeptide is Protein turtle homolog B (IGSF9B) (Homo sapiens (Human)).